Reading from the N-terminus, the 689-residue chain is Glycine--tRNA ligase beta subunit (689 aa).

Belongs to the class-II aminoacyl-tRNA synthetase family. Tetramer of two alpha and two beta subunits.

It localises to the cytoplasm. It catalyses the reaction tRNA(Gly) + glycine + ATP = glycyl-tRNA(Gly) + AMP + diphosphate. The polypeptide is Glycine--tRNA ligase beta subunit (glyS) (Pasteurella multocida (strain Pm70)).